We begin with the raw amino-acid sequence, 609 residues long: MAGTLDLDKGCTVEELLRGCIEAFDDSGKVRDPQLVRMFLMMHPWYIPSSQLAAKLLHIYQQSRKDNSNSLQVKTCHLVRYWISAFPAEFDLNPELAEQIKELKALLDQEGNRRHSSLIDIDSVPTYKWKRQVTQRNPVGQKKRKMSLLFDHLEPMELAEHLTYLEYRSFCKILFQDYHSFVTHGCTVDNPVLERFISLFNSVSQWVQLMILSKPTAPQRALVITHFVHVAEKLLQLQNFNTLMAVVGGLSHSSISRLKETHSHVSPETIKLWEGLTELVTATGNYGNYRRRLAACVGFRFPILGVHLKDLVALQLALPDWLDPARTRLNGAKMKQLFSILEELAMVTSLRPPVQANPDLLSLLTVSLDQYQTEDELYQLSLQREPRSKSSPTSPTSCTPPPRPPVLEEWTSAAKPKLDQALVVEHIEKMVESVFRNFDVDGDGHISQEEFQIIRGNFPYLSAFGDLDQNQDGCISREEMVSYFLRSSSVLGGRMGFVHNFQESNSLRPVACRHCKALILGIYKQGLKCRACGVNCHKQCKDRLSVECRRRAQSVSLEGSAPSPSPMHSHHHRAFSFSLPRPGRRGSRPPEIREEEVQTVEDGVFDIHL.

The N-myristoyl glycine moiety is linked to residue alanine 2. Residues 4–126 (TLDLDKGCTV…SLIDIDSVPT (123 aa)) enclose the N-terminal Ras-GEF domain. Leucine 7 carries S-palmitoyl cysteine lipidation. 3 positions are modified to phosphoserine: serine 116, serine 117, and serine 147. A Ras-GEF domain is found at 154–387 (EPMELAEHLT…YQLSLQREPR (234 aa)). The interval 382-406 (LQREPRSKSSPTSPTSCTPPPRPPV) is disordered. EF-hand domains lie at 426-461 (HIEK…FPYL) and 455-490 (RGNF…SSSV). Ca(2+)-binding residues include aspartate 439, aspartate 441, aspartate 443, histidine 445, glutamate 450, aspartate 468, asparagine 470, aspartate 472, cysteine 474, and glutamate 479. The Phorbol-ester/DAG-type zinc-finger motif lies at 498 to 548 (VHNFQESNSLRPVACRHCKALILGIYKQGLKCRACGVNCHKQCKDRLSVEC). A phosphoserine mark is found at serine 554 and serine 576. Residues 557–592 (LEGSAPSPSPMHSHHHRAFSFSLPRPGRRGSRPPEI) form a disordered region.

The protein belongs to the RASGRP family. Forms a signaling complex with RAP1 and BRAF. Interacts with RAP1. Interacts with F-actin. In terms of processing, isoform 2 is palmitoylated and myristoylated. Detected in platelets, neutrophils and T lymphocytes (at protein level). Expressed in brain where it is enriched in the striatum. Also expressed in the hematopoietic system. Detected in heart, brain, lung, placenta, liver, skeletal muscle and kidney.

It is found in the cytoplasm. The protein resides in the cytosol. Its subcellular location is the cell membrane. The protein localises to the synapse. It localises to the synaptosome. It is found in the cell projection. The protein resides in the ruffle membrane. Isoform 1 and isoform 2 are differently regulated by calcium and DAG. Functions as a calcium- and DAG-regulated nucleotide exchange factor specifically activating Rap through the exchange of bound GDP for GTP. May also activate other GTPases such as RRAS, RRAS2, NRAS, KRAS but not HRAS. Functions in aggregation of platelets and adhesion of T-lymphocytes and neutrophils probably through inside-out integrin activation. May function in the muscarinic acetylcholine receptor M1/CHRM1 signaling pathway. This chain is RAS guanyl-releasing protein 2 (RASGRP2), found in Homo sapiens (Human).